The sequence spans 34 residues: Photosystem II reaction center protein M (34 aa).

Residues 5 to 25 traverse the membrane as a helical segment; that stretch reads ILAFIATALFILVPTAFLLII.

This sequence belongs to the PsbM family. In terms of assembly, PSII is composed of 1 copy each of membrane proteins PsbA, PsbB, PsbC, PsbD, PsbE, PsbF, PsbH, PsbI, PsbJ, PsbK, PsbL, PsbM, PsbT, PsbX, PsbY, PsbZ, Psb30/Ycf12, at least 3 peripheral proteins of the oxygen-evolving complex and a large number of cofactors. It forms dimeric complexes.

The protein resides in the plastid. It localises to the chloroplast thylakoid membrane. Its function is as follows. One of the components of the core complex of photosystem II (PSII). PSII is a light-driven water:plastoquinone oxidoreductase that uses light energy to abstract electrons from H(2)O, generating O(2) and a proton gradient subsequently used for ATP formation. It consists of a core antenna complex that captures photons, and an electron transfer chain that converts photonic excitation into a charge separation. This subunit is found at the monomer-monomer interface. The sequence is that of Photosystem II reaction center protein M from Cucumis sativus (Cucumber).